Consider the following 473-residue polypeptide: Aspartyl/glutamyl-tRNA(Asn/Gln) amidotransferase subunit B (473 aa).

Belongs to the GatB/GatE family. GatB subfamily. As to quaternary structure, heterotrimer of A, B and C subunits.

The enzyme catalyses L-glutamyl-tRNA(Gln) + L-glutamine + ATP + H2O = L-glutaminyl-tRNA(Gln) + L-glutamate + ADP + phosphate + H(+). The catalysed reaction is L-aspartyl-tRNA(Asn) + L-glutamine + ATP + H2O = L-asparaginyl-tRNA(Asn) + L-glutamate + ADP + phosphate + 2 H(+). In terms of biological role, allows the formation of correctly charged Asn-tRNA(Asn) or Gln-tRNA(Gln) through the transamidation of misacylated Asp-tRNA(Asn) or Glu-tRNA(Gln) in organisms which lack either or both of asparaginyl-tRNA or glutaminyl-tRNA synthetases. The reaction takes place in the presence of glutamine and ATP through an activated phospho-Asp-tRNA(Asn) or phospho-Glu-tRNA(Gln). This chain is Aspartyl/glutamyl-tRNA(Asn/Gln) amidotransferase subunit B, found in Sulfurisphaera tokodaii (strain DSM 16993 / JCM 10545 / NBRC 100140 / 7) (Sulfolobus tokodaii).